A 440-amino-acid chain; its full sequence is MENIQKLIARYPLVEDLVALKETTWFNPGATSLAQGLPYVGLTEQDVNAAHDRLARFAPYLAKAFPQTAAAGGMIESDVVAIPAMQKRLEKEYGQTINGEMLLKKDSHLAISGSIKARGGIYEVLTHAEKLALEAGLLTTDDDYSVLLSPEFKQFFSQYSIAVGSTGNLGLSIGIMSACIGFKVTVHMSADARAWKKAKLRSHGVTVVEYEDDYGVAVEQGRKAAQSDPNCFFIDDENSRTLFLGYAVAGQRLKAQFAQQGRVVDASHPLFVYLPCGVGGGPGGVAFGLKLAFGDNVHCFFAEPTHSPCMLLGVYTGLHDAISVQDIGIDNLTAADGLAVGRASGFVGRAMERLLDGLYTLDDQTMYDMLGWLAQEEGIRLEPSALAGMAGPQRICASVAYQQRHGFSQTQLGNATHLVWATGGGMVPEDEMEQYLAKGR.

An N6-(pyridoxal phosphate)lysine modification is found at Lys116.

It belongs to the serine/threonine dehydratase family. DsdA subfamily. In terms of assembly, monomer. The cofactor is pyridoxal 5'-phosphate.

The catalysed reaction is D-serine = pyruvate + NH4(+). The polypeptide is D-serine dehydratase (Salmonella typhimurium (strain LT2 / SGSC1412 / ATCC 700720)).